A 681-amino-acid chain; its full sequence is DNA ligase (681 aa).

NAD(+)-binding positions include 32–36 (DIEYD), 81–82 (SL), and Glu113. The N6-AMP-lysine intermediate role is filled by Lys115. Positions 136, 173, 290, and 314 each coordinate NAD(+). Residues Cys408, Cys411, Cys426, and Cys432 each coordinate Zn(2+). A BRCT domain is found at 596–681 (EIDSPFAGKT…LNNHGDVSTL (86 aa)).

This sequence belongs to the NAD-dependent DNA ligase family. LigA subfamily. It depends on Mg(2+) as a cofactor. Mn(2+) serves as cofactor.

The enzyme catalyses NAD(+) + (deoxyribonucleotide)n-3'-hydroxyl + 5'-phospho-(deoxyribonucleotide)m = (deoxyribonucleotide)n+m + AMP + beta-nicotinamide D-nucleotide.. DNA ligase that catalyzes the formation of phosphodiester linkages between 5'-phosphoryl and 3'-hydroxyl groups in double-stranded DNA using NAD as a coenzyme and as the energy source for the reaction. It is essential for DNA replication and repair of damaged DNA. The sequence is that of DNA ligase from Pectobacterium atrosepticum (strain SCRI 1043 / ATCC BAA-672) (Erwinia carotovora subsp. atroseptica).